A 112-amino-acid polypeptide reads, in one-letter code: Ribonuclease P protein component (112 aa).

It belongs to the RnpA family. Consists of a catalytic RNA component (M1 or rnpB) and a protein subunit.

The catalysed reaction is Endonucleolytic cleavage of RNA, removing 5'-extranucleotides from tRNA precursor.. RNaseP catalyzes the removal of the 5'-leader sequence from pre-tRNA to produce the mature 5'-terminus. It can also cleave other RNA substrates such as 4.5S RNA. The protein component plays an auxiliary but essential role in vivo by binding to the 5'-leader sequence and broadening the substrate specificity of the ribozyme. This chain is Ribonuclease P protein component, found in Pelotomaculum thermopropionicum (strain DSM 13744 / JCM 10971 / SI).